Consider the following 201-residue polypeptide: Peptide deformylase (201 aa).

The segment covering 1–17 (MANNFSQLARKSKTNSP) has biased composition (polar residues). Positions 1-24 (MANNFSQLARKSKTNSPIEKVSKE) are disordered. Positions 121 and 163 each coordinate Fe cation. Residue E164 is part of the active site. A Fe cation-binding site is contributed by H167.

This sequence belongs to the polypeptide deformylase family. Requires Fe(2+) as cofactor.

The catalysed reaction is N-terminal N-formyl-L-methionyl-[peptide] + H2O = N-terminal L-methionyl-[peptide] + formate. In terms of biological role, removes the formyl group from the N-terminal Met of newly synthesized proteins. Requires at least a dipeptide for an efficient rate of reaction. N-terminal L-methionine is a prerequisite for activity but the enzyme has broad specificity at other positions. The sequence is that of Peptide deformylase from Prochlorococcus marinus subsp. pastoris (strain CCMP1986 / NIES-2087 / MED4).